The sequence spans 488 residues: Mannitol 2-dehydrogenase (488 aa).

Residue 37 to 48 coordinates NAD(+); it reads IVHVGVGGFHRA.

Belongs to the mannitol dehydrogenase family. In terms of assembly, monomer.

The catalysed reaction is D-mannitol + NAD(+) = D-fructose + NADH + H(+). Functionally, catalyzes the NAD(H)-dependent interconversion of D-fructose and D-mannitol in the mannitol metabolic pathway. The protein is Mannitol 2-dehydrogenase of Aspergillus niger (strain ATCC MYA-4892 / CBS 513.88 / FGSC A1513).